Here is a 617-residue protein sequence, read N- to C-terminus: Urocanate reductase (617 aa).

An FMN phosphoryl threonine modification is found at Thr-70. Residues Ala-124, Glu-143, Asn-151, Thr-152, Gly-156, Gly-157, and Asp-387 each contribute to the FAD site. Catalysis depends on Arg-446, which acts as the Proton donor. 3 residues coordinate FAD: His-553, Glu-582, and Leu-598.

The protein belongs to the FAD-dependent oxidoreductase 2 family. FRD/SDH subfamily. The cofactor is FAD. Requires FMN as cofactor.

It catalyses the reaction dihydrourocanate + A = urocanate + AH2. Catalyzes the two-electron reduction of urocanate to dihydrourocanate (also named imidazole propionate or deamino-histidine). Dihydrourocanate is present at higher concentrations in subjects with type 2 diabetes, and directly impairs glucose tolerance and insulin signaling at the level of insulin receptor substrate (IRS) through activation of p38 gamma (MAPK12)-p62-mTORC1. Therefore, the UrdA enzyme from the gut bacteria L.fermentum strain NBRC 3956 may contribute to the pathogenesis of type 2 diabetes by producing the microbial metabolite dihydrourocanate. In Limosilactobacillus fermentum (strain NBRC 3956 / LMG 18251) (Lactobacillus fermentum), this protein is Urocanate reductase.